The chain runs to 308 residues: Ycf92-like protein (308 aa).

The next 5 membrane-spanning stretches (helical) occupy residues 41 to 61, 75 to 95, 153 to 173, 192 to 212, and 288 to 308; these read FANN…TLIA, LLTL…GLGV, ISTI…TTAP, IPVT…PLVL, and WLAI…GNQI.

The protein belongs to the ycf92 family.

Its subcellular location is the membrane. The sequence is that of Ycf92-like protein from Nostoc sp. (strain PCC 7120 / SAG 25.82 / UTEX 2576).